Here is a 446-residue protein sequence, read N- to C-terminus: tRNA modification GTPase MnmE (446 aa).

Residues Arg24, Glu81, and Lys120 each contribute to the (6S)-5-formyl-5,6,7,8-tetrahydrofolate site. The 153-residue stretch at 216–368 folds into the TrmE-type G domain; that stretch reads GLHAVLIGPP…LHIRLRELAL (153 aa). Asn226 lines the K(+) pocket. GTP is bound by residues 226 to 231, 245 to 251, and 270 to 273; these read NAGKSS, TDVAGTT, and DTAG. Ser230 contributes to the Mg(2+) binding site. 3 residues coordinate K(+): Thr245, Val247, and Thr250. Thr251 contacts Mg(2+). Lys446 provides a ligand contact to (6S)-5-formyl-5,6,7,8-tetrahydrofolate.

Belongs to the TRAFAC class TrmE-Era-EngA-EngB-Septin-like GTPase superfamily. TrmE GTPase family. Homodimer. Heterotetramer of two MnmE and two MnmG subunits. It depends on K(+) as a cofactor.

The protein resides in the cytoplasm. Exhibits a very high intrinsic GTPase hydrolysis rate. Involved in the addition of a carboxymethylaminomethyl (cmnm) group at the wobble position (U34) of certain tRNAs, forming tRNA-cmnm(5)s(2)U34. This Xanthomonas oryzae pv. oryzae (strain PXO99A) protein is tRNA modification GTPase MnmE.